We begin with the raw amino-acid sequence, 113 residues long: UPF0102 protein Mfla_2283 (113 aa).

This sequence belongs to the UPF0102 family.

In Methylobacillus flagellatus (strain ATCC 51484 / DSM 6875 / VKM B-1610 / KT), this protein is UPF0102 protein Mfla_2283.